The sequence spans 116 residues: Large ribosomal subunit protein bL17 (116 aa).

Belongs to the bacterial ribosomal protein bL17 family. Part of the 50S ribosomal subunit. Contacts protein L32.

The chain is Large ribosomal subunit protein bL17 from Synechococcus sp. (strain JA-2-3B'a(2-13)) (Cyanobacteria bacterium Yellowstone B-Prime).